Consider the following 488-residue polypeptide: Histone deacetylase 2 (488 aa).

The interval K9 to D322 is histone deacetylase. 1D-myo-inositol 1,4,5,6-tetrakisphosphate is bound by residues G28 and K32. H142 is a catalytic residue. Zn(2+) is bound by residues D177, H179, and D265. Residue R271 participates in 1D-myo-inositol 1,4,5,6-tetrakisphosphate binding. Residues A389–P488 form a disordered region. Residues P402 to C417 are compositionally biased toward basic and acidic residues. Positions D418 to G428 are enriched in acidic residues. Residues E429–K481 show a composition bias toward basic and acidic residues.

Belongs to the histone deacetylase family. HD type 1 subfamily. Zn(2+) is required as a cofactor.

The protein localises to the nucleus. It is found in the cytoplasm. It carries out the reaction N(6)-acetyl-L-lysyl-[histone] + H2O = L-lysyl-[histone] + acetate. The enzyme catalyses N(6)-acetyl-L-lysyl-[protein] + H2O = L-lysyl-[protein] + acetate. The catalysed reaction is N(6)-(2E)-butenoyl-L-lysyl-[protein] + H2O = (2E)-2-butenoate + L-lysyl-[protein]. It catalyses the reaction N(6)-(2-hydroxyisobutanoyl)-L-lysyl-[protein] + H2O = 2-hydroxy-2-methylpropanoate + L-lysyl-[protein]. It carries out the reaction N(6)-[(S)-lactoyl]-L-lysyl-[protein] + H2O = (S)-lactate + L-lysyl-[protein]. With respect to regulation, inositol tetraphosphate (1D-myo-inositol 1,4,5,6-tetrakisphosphate) may act as an intermolecular glue between HDAC2 and N-Cor repressor complex components. Functionally, histone deacetylase that catalyzes the deacetylation of lysine residues on the N-terminal part of the core histones (H2A, H2B, H3 and H4). Histone deacetylation gives a tag for epigenetic repression and plays an important role in transcriptional regulation, cell cycle progression and developmental events. Histone deacetylases act via the formation of large multiprotein complexes. Also deacetylates non-histone proteins. In addition to protein deacetylase activity, also acts as a protein-lysine deacylase by recognizing other acyl groups: catalyzes removal of (2E)-butenoyl (crotonyl), lactoyl (lactyl) and 2-hydroxyisobutanoyl (2-hydroxyisobutyryl) acyl groups from lysine residues, leading to protein decrotonylation, delactylation and de-2-hydroxyisobutyrylation, respectively. The sequence is that of Histone deacetylase 2 (HDAC2) from Gallus gallus (Chicken).